Reading from the N-terminus, the 1286-residue chain is CLIP-associating protein 2 (1286 aa).

Residues 1–40 (MRRLICKRICDYKSFDDEESVDGNRPSSAASAFKVPAPKT) form a golgi localization region. Phosphoserine occurs at positions 14 and 20. The segment at 17-70 (DEESVDGNRPSSAASAFKVPAPKTPGNPVNSARKPGSAGGPKAGGTSKEGGAGA) is disordered. A compositionally biased stretch (gly residues) spans 53–69 (SAGGPKAGGTSKEGGAG). Positions 66 to 317 (GGAGAVDEDD…KSLQTYLKSS (252 aa)) are TOG 1. HEAT repeat units follow at residues 179 to 214 (HGAEAIVPTLFNLVPNSAKVMATSGCAAIRFIIRHT), 215 to 251 (HVPRLIPLITSNCTSKSVPVRRRSFEFLDLLLQEWQT), and 256 to 293 (RHAAVLVETIKKGIHDADAEARVEARKTYMGLRNHFPG). Disordered regions lie at residues 320-350 (VASLPQSDRSSSSSQESLNRPFSSKWSTANP) and 355-374 (GRVSVGGSKASPLPGSLQRS). Residues serine 322, serine 333, and serine 336 each carry the phosphoserine modification. Residues 322-340 (SLPQSDRSSSSSQESLNRP) show a composition bias toward low complexity. Polar residues predominate over residues 341-350 (FSSKWSTANP). A phosphoserine mark is found at serine 374, serine 376, and serine 413. Residues 410–473 (SYASLEDTSD…GSRSGSPGRV (64 aa)) form a disordered region. A compositionally biased stretch (basic and acidic residues) spans 417–431 (TSDKMDGTASEDGRV). The tract at residues 450 to 565 (RGRSRTKMVS…GPGYGMSQSS (116 aa)) is interaction with microtubules, MAPRE1 and MAPRE3. The span at 459–473 (SQSQPGSRSGSPGRV) shows a compositional bias: low complexity. Serine 461, serine 465, serine 469, serine 484, and serine 495 each carry phosphoserine. Residues 492–566 (NSASAQKRSK…PGYGMSQSSR (75 aa)) are disordered. The SXIP motif 1; mediates interaction with MAPRE1 and targeting to microtubule plus ends signature appears at 500 to 503 (SKIP). Phosphoserine is present on serine 513. The SXIP motif 2; mediates interaction with MAPRE1 and targeting to microtubule plus ends motif lies at 523–526 (SRIP). Phosphoserine is present on residues serine 531, serine 535, serine 570, serine 572, serine 581, serine 614, and serine 620. A compositionally biased stretch (basic and acidic residues) spans 606-616 (RYESYGMHSDD). Positions 606 to 638 (RYESYGMHSDDDANSDASSACSERSYSSRNGSI) are disordered. The span at 620–634 (SDASSACSERSYSSR) shows a compositional bias: low complexity. Residues 642–873 (MRQTEDVAEV…TKLLHNHLRN (232 aa)) are TOG 2. 2 HEAT repeats span residues 702-739 (KVFSMFLETLVDFIQVHKDDLQDWLFVLLTQLLKKMGA) and 764-801 (LQFNILMRFTVDQTQTPSLKVKVAILKYIETLAKQMDP). Position 779 is a phosphothreonine (threonine 779). Positions 864-1286 (TKLLHNHLRN…DPTTDVSGQS (423 aa)) are interaction with RSN and localization to the Golgi and kinetochores. Disordered regions lie at residues 870 to 920 (HLRN…FDYD) and 944 to 990 (SFRS…QPAL). 2 stretches are compositionally biased toward polar residues: residues 872–884 (RNTGNGTQSSMGS) and 893–914 (SPANWSSPLTSPTNTSQNTLSP). Position 884 is a phosphoserine (serine 884). Phosphoserine is present on residues serine 944, serine 947, serine 1005, and serine 1021. Positions 947–964 (SQEDMSEPLKRDPKKEDG) are enriched in basic and acidic residues. A required for cortical localization region spans residues 1009-1286 (RDYNPYNYSD…DPTTDVSGQS (278 aa)). HEAT repeat units follow at residues 1046–1083 (LDHSDLVAELLKELSNHNERIEERKIALYELMKLTQEE), 1090–1127 (EHFKTILLLLLETLGDKEPTIRALALKVLKEILRHQPA), and 1208–1245 (LLLPEIMPGLIQGYDNSESSVRKACVFCLVAVHAVIGD).

It belongs to the CLASP family. As to quaternary structure, interacts with microtubules. Interacts with MAPRE1; probably required for targeting to the growing microtubule plus ends. Interacts with CLIP2, ERC1, MAPRE3, PHLDB2 and RSN. The interaction with ERC1 may be mediated by PHLDB2. Interacts with GCC2; recruits CLASP2 to Golgi membranes. Interacts with MACF1. Interacts with SOGA1 and MTCL1. In terms of processing, phosphorylated by GSK3B. Phosphorylation by GSK3B may negatively regulate binding to microtubule lattices in lamella.

Its subcellular location is the cytoplasm. The protein resides in the cytoskeleton. The protein localises to the microtubule organizing center. It is found in the centrosome. It localises to the chromosome. Its subcellular location is the centromere. The protein resides in the kinetochore. The protein localises to the spindle. It is found in the golgi apparatus. It localises to the trans-Golgi network. Its subcellular location is the cell membrane. The protein resides in the cell projection. The protein localises to the ruffle membrane. It is found in the cell cortex. Microtubule plus-end tracking protein that promotes the stabilization of dynamic microtubules. Involved in the nucleation of noncentrosomal microtubules originating from the trans-Golgi network (TGN). Required for the polarization of the cytoplasmic microtubule arrays in migrating cells towards the leading edge of the cell. May act at the cell cortex to enhance the frequency of rescue of depolymerizing microtubules by attaching their plus-ends to cortical platforms composed of ERC1 and PHLDB2. This cortical microtubule stabilizing activity is regulated at least in part by phosphatidylinositol 3-kinase signaling. Also performs a similar stabilizing function at the kinetochore which is essential for the bipolar alignment of chromosomes on the mitotic spindle. Acts as a mediator of ERBB2-dependent stabilization of microtubules at the cell cortex. This Rattus norvegicus (Rat) protein is CLIP-associating protein 2 (Clasp2).